A 196-amino-acid chain; its full sequence is MTAEGHLLFSIACAVFAKNAELTPVLAQGDWWHIVPSAILTCLLPDIDHPKSFLGQRLKWISKPIARAFGHRGFTHSLLAVFALLATFYLKVPEGWFIPADALQGMVLGYLSHILADMLTPAGVPLLWPCRWRFRLPILVPQKGNQLERFICMALFVWSVWMPHSLPENSAVRWSSQMINTLQIQFHRLIKHQVEY.

At 1 to 23 the chain is on the periplasmic side; it reads MTAEGHLLFSIACAVFAKNAELT. Residues 24 to 44 traverse the membrane as a helical segment; that stretch reads PVLAQGDWWHIVPSAILTCLL. The Cytoplasmic portion of the chain corresponds to 45-77; the sequence is PDIDHPKSFLGQRLKWISKPIARAFGHRGFTHS. Residues 78–98 traverse the membrane as a helical segment; it reads LLAVFALLATFYLKVPEGWFI. The Periplasmic segment spans residues 99–106; that stretch reads PADALQGM. Residues 107–127 form a helical membrane-spanning segment; it reads VLGYLSHILADMLTPAGVPLL. Residues 128–149 are Cytoplasmic-facing; it reads WPCRWRFRLPILVPQKGNQLER. A helical membrane pass occupies residues 150–170; the sequence is FICMALFVWSVWMPHSLPENS. Topologically, residues 171-196 are periplasmic; it reads AVRWSSQMINTLQIQFHRLIKHQVEY.

To B.subtilis YvsG.

The protein localises to the cell inner membrane. This chain is Inner membrane protein YdjM (ydjM), found in Escherichia coli (strain K12).